The primary structure comprises 257 residues: Urease accessory protein UreD (257 aa).

It belongs to the UreD family. In terms of assembly, ureD, UreF and UreG form a complex that acts as a GTP-hydrolysis-dependent molecular chaperone, activating the urease apoprotein by helping to assemble the nickel containing metallocenter of UreC. The UreE protein probably delivers the nickel.

It localises to the cytoplasm. Its function is as follows. Required for maturation of urease via the functional incorporation of the urease nickel metallocenter. This is Urease accessory protein UreD from Sporosarcina pasteurii (Bacillus pasteurii).